Reading from the N-terminus, the 450-residue chain is UDP-N-acetylmuramoylalanine--D-glutamate ligase (450 aa).

ATP is bound at residue 119 to 125; it reads GSNGKTT.

The protein belongs to the MurCDEF family.

The protein resides in the cytoplasm. The enzyme catalyses UDP-N-acetyl-alpha-D-muramoyl-L-alanine + D-glutamate + ATP = UDP-N-acetyl-alpha-D-muramoyl-L-alanyl-D-glutamate + ADP + phosphate + H(+). Its pathway is cell wall biogenesis; peptidoglycan biosynthesis. Cell wall formation. Catalyzes the addition of glutamate to the nucleotide precursor UDP-N-acetylmuramoyl-L-alanine (UMA). This Streptococcus pneumoniae (strain Taiwan19F-14) protein is UDP-N-acetylmuramoylalanine--D-glutamate ligase.